A 104-amino-acid polypeptide reads, in one-letter code: uncharacterized protein (104 aa).

This is an uncharacterized protein from Schizosaccharomyces pombe (strain 972 / ATCC 24843) (Fission yeast).